The primary structure comprises 435 residues: Adenylosuccinate synthetase (435 aa).

GTP-binding positions include 11-17 (GDEGKGK) and 39-41 (GHT). The Proton acceptor role is filled by D12. The Mg(2+) site is built by D12 and G39. Residues 12–15 (DEGK), 37–40 (NAGH), T128, R142, Q223, T238, and R302 each bind IMP. Catalysis depends on H40, which acts as the Proton donor. 298-304 (SVTGRPR) is a substrate binding site. Residues R304, 330–332 (KLD), and 412–414 (STG) each bind GTP.

Belongs to the adenylosuccinate synthetase family. In terms of assembly, homodimer. Requires Mg(2+) as cofactor.

The protein localises to the cytoplasm. It catalyses the reaction IMP + L-aspartate + GTP = N(6)-(1,2-dicarboxyethyl)-AMP + GDP + phosphate + 2 H(+). It functions in the pathway purine metabolism; AMP biosynthesis via de novo pathway; AMP from IMP: step 1/2. Functionally, plays an important role in the de novo pathway of purine nucleotide biosynthesis. Catalyzes the first committed step in the biosynthesis of AMP from IMP. In Coxiella burnetii (strain RSA 331 / Henzerling II), this protein is Adenylosuccinate synthetase.